A 370-amino-acid polypeptide reads, in one-letter code: Versatile peroxidase VPS1 (370 aa).

An N-terminal signal peptide occupies residues 1-20 (MAFAKLSAFVLALGATVALG). A propeptide spanning residues 21–31 (ESPTHRCLNKR) is cleaved from the precursor. 4 disulfides stabilise this stretch: C34/C46, C45/C315, C65/C151, and C279/C344. The Mn(2+) site is built by E67 and E71. H78 functions as the Proton acceptor in the catalytic mechanism. Residues D79, G97, D99, and S101 each coordinate Ca(2+). A glycan (N-linked (GlcNAc...) asparagine) is linked at N133. The active-site Tryptophan radical intermediate is the W201. H206 provides a ligand contact to heme b. T207 contacts Ca(2+). A heme b-binding site is contributed by 210-214 (AADHV). D212 serves as a coordination point for Mn(2+). D224, T226, T229, and D231 together coordinate Ca(2+).

Belongs to the peroxidase family. Ligninase subfamily. It depends on heme b as a cofactor. Ca(2+) is required as a cofactor.

It localises to the secreted. It catalyses the reaction 1-(4-hydroxy-3-methoxyphenyl)-2-(2-methoxyphenoxy)propane-1,3-diol + H2O2 = guaiacol + vanillin + glycolaldehyde + H2O. It carries out the reaction 2 Mn(2+) + H2O2 + 2 H(+) = 2 Mn(3+) + 2 H2O. In terms of biological role, a versatile ligninolytic peroxidase that combines the substrate specificity characteristics of the two other ligninolytic peroxidases, manganese peroxidase and lignin peroxidase. The chain is Versatile peroxidase VPS1 (vps1) from Pleurotus eryngii (Boletus of the steppes).